Consider the following 72-residue polypeptide: Sec-independent protein translocase protein TatA (72 aa).

The chain crosses the membrane as a helical span at residues 1-21 (MLGGISIWQLLIVLAILVLIF).

Belongs to the TatA/E family. In terms of assembly, the Tat system comprises two distinct complexes: a TatABC complex, containing multiple copies of TatA, TatB and TatC subunits, and a separate TatA complex, containing only TatA subunits. Substrates initially bind to the TatABC complex, which probably triggers association of the separate TatA complex to form the active translocon.

It localises to the cell inner membrane. Its function is as follows. Part of the twin-arginine translocation (Tat) system that transports large folded proteins containing a characteristic twin-arginine motif in their signal peptide across membranes. TatA could form the protein-conducting channel of the Tat system. The protein is Sec-independent protein translocase protein TatA of Marinomonas sp. (strain MWYL1).